The following is a 427-amino-acid chain: Histidine--tRNA ligase (427 aa).

Belongs to the class-II aminoacyl-tRNA synthetase family. Homodimer.

Its subcellular location is the cytoplasm. It catalyses the reaction tRNA(His) + L-histidine + ATP = L-histidyl-tRNA(His) + AMP + diphosphate + H(+). This chain is Histidine--tRNA ligase, found in Proteus mirabilis (strain HI4320).